The primary structure comprises 69 residues: Parvalbumin beta 3 (69 aa).

An N-acetylalanine modification is found at Ala-1. The EF-hand domain maps to 24-59 (FNYKTFFKFFAIIDQDHSGFIEEEELKLFLQTFSAG). Ca(2+) contacts are provided by Asp-37, Asp-39, Ser-41, Phe-43, Glu-45, and Glu-48.

Belongs to the parvalbumin family.

Its function is as follows. In muscle, parvalbumin is thought to be involved in relaxation after contraction. It binds two calcium ions. The chain is Parvalbumin beta 3 from Merluccius polli (Benguela hake).